Reading from the N-terminus, the 411-residue chain is Imidazolonepropionase (411 aa).

2 residues coordinate Fe(3+): His-75 and His-77. The Zn(2+) site is built by His-75 and His-77. Arg-84, Tyr-147, and His-180 together coordinate 4-imidazolone-5-propanoate. Tyr-147 provides a ligand contact to N-formimidoyl-L-glutamate. His-245 provides a ligand contact to Fe(3+). His-245 contributes to the Zn(2+) binding site. Gln-248 contacts 4-imidazolone-5-propanoate. Fe(3+) is bound at residue Asp-320. Asp-320 provides a ligand contact to Zn(2+). Positions 322 and 324 each coordinate N-formimidoyl-L-glutamate. Position 325 (Thr-325) interacts with 4-imidazolone-5-propanoate.

Belongs to the metallo-dependent hydrolases superfamily. HutI family. Zn(2+) serves as cofactor. Requires Fe(3+) as cofactor.

The protein resides in the cytoplasm. The catalysed reaction is 4-imidazolone-5-propanoate + H2O = N-formimidoyl-L-glutamate. The protein operates within amino-acid degradation; L-histidine degradation into L-glutamate; N-formimidoyl-L-glutamate from L-histidine: step 3/3. Its function is as follows. Catalyzes the hydrolytic cleavage of the carbon-nitrogen bond in imidazolone-5-propanoate to yield N-formimidoyl-L-glutamate. It is the third step in the universal histidine degradation pathway. The polypeptide is Imidazolonepropionase (Aeromonas hydrophila subsp. hydrophila (strain ATCC 7966 / DSM 30187 / BCRC 13018 / CCUG 14551 / JCM 1027 / KCTC 2358 / NCIMB 9240 / NCTC 8049)).